The following is a 470-amino-acid chain: Putative multidrug resistance protein MdtD (470 aa).

Residues 1-11 (MTELPDNTRWQ) are Periplasmic-facing. The helical transmembrane segment at 12–32 (LWIVALGFFMQSLDTTIVNTA) threads the bilayer. At 33–48 (LPSMAKSLGESPLHMH) the chain is on the cytoplasmic side. Residues 49 to 69 (MVVVSYVLTVAVMLPASGWLA) traverse the membrane as a helical segment. The Periplasmic portion of the chain corresponds to 70 to 76 (DKIGVRN). The helical transmembrane segment at 77 to 97 (IFFAAIVLFTLGSLFCALSGT) threads the bilayer. Over 98-101 (LNQL) the chain is Cytoplasmic. The helical transmembrane segment at 102 to 124 (VLARVLQGVGGAMMVPVGRLTVM) threads the bilayer. Residues 125–137 (KIVPRAQYMAAMT) lie on the Periplasmic side of the membrane. The helical transmembrane segment at 138-158 (FVTLPGQIGPLLGPALGGVLV) threads the bilayer. Over 159–164 (EYASWH) the chain is Cytoplasmic. A helical transmembrane segment spans residues 165-185 (WIFLINIPVGIVGAMATFMLM). Over 186-196 (PNYTIETRRFD) the chain is Periplasmic. Residues 197 to 217 (LPGFLLLAIGMAVLTLALDGS) form a helical membrane-spanning segment. Residues 218-221 (KSMG) lie on the Cytoplasmic side of the membrane. The helical transmembrane segment at 222-242 (ISPWTLAGLAAGGAAAILLYL) threads the bilayer. The Periplasmic segment spans residues 243 to 262 (LHAKKNSGALFSLRLFRTPT). A helical membrane pass occupies residues 263–283 (FSLGLLGSFAGRIGSGMLPFM). At 284-285 (TP) the chain is on the cytoplasmic side. Residues 286–306 (VFLQIGLGFSPFHAGLMMIPM) traverse the membrane as a helical segment. At 307–341 (VLGSMGMKRIVVQIVNRFGYRRVLVATTLGLALVS) the chain is on the periplasmic side. Residues 342-362 (LLFMSVALLGWYYLLPLVLLL) form a helical membrane-spanning segment. At 363 to 395 (QGMVNSARFSSMNTLTLKDLPDTLASSGNSLLS) the chain is on the cytoplasmic side. Residues 396 to 416 (MIMQLSMSIGVTIAGMLLGMF) form a helical membrane-spanning segment. Residues 417–430 (GQQHIGIDSSATHH) are Periplasmic-facing. A helical transmembrane segment spans residues 431 to 451 (VFMYTWLCMAVIIALPAIIFA). Residues 452–470 (RVPNDTQQNMVISRRKRSL) lie on the Cytoplasmic side of the membrane.

It belongs to the major facilitator superfamily. TCR/Tet family.

It is found in the cell inner membrane. The chain is Putative multidrug resistance protein MdtD from Salmonella heidelberg (strain SL476).